The following is a 79-amino-acid chain: U-myrmeciitoxin(01)-Mg9a (79 aa).

Residues Met1 to Ala21 form the signal peptide. The propeptide occupies Pro22 to Pro48. Position 78 is a glutamine amide (Gln78).

As to expression, expressed by the venom gland.

Its subcellular location is the secreted. In terms of biological role, may have antimicrobial properties, like most ant linear peptides. The chain is U-myrmeciitoxin(01)-Mg9a from Myrmecia gulosa (Red bulldog ant).